A 239-amino-acid polypeptide reads, in one-letter code: Derlin-2 (239 aa).

Topologically, residues 1-57 are cytoplasmic; it reads MAYQSLRLEYLQIPPVSRAYTTACVLTTAAVQLELITPFQLYFNPELIFKHFQIWRL. The chain crosses the membrane as a helical span at residues 58 to 78; that stretch reads ITNFLFFGPVGFNFLFNMIFL. At 79–96 the chain is on the lumenal side; the sequence is YRYCRMLEEGSFRGRTAD. A helical transmembrane segment spans residues 97–117; the sequence is FVFMFLFGGFLMTLFGLFVSL. Residues 118–150 are Cytoplasmic-facing; that stretch reads VFLGQAFTIMLVYVWSRRNPYVRMNFFGLLNFQ. The chain crosses the membrane as a helical span at residues 151–171; the sequence is APFLPWVLMGFSLLLGNSIIV. Aspartate 172 is a topological domain (lumenal). The chain crosses the membrane as a helical span at residues 173 to 193; the sequence is LLGIAVGHIYFFLEDIFPNQP. At 194 to 239 the chain is on the cytoplasmic side; sequence GGIRILKTPSILRTIFDTPDEDPNYNPLPEERPGGFAWGEGQRLGG. Positions 214–239 are disordered; it reads EDPNYNPLPEERPGGFAWGEGQRLGG. Residues 229 to 239 are compositionally biased toward gly residues; the sequence is FAWGEGQRLGG.

The protein belongs to the derlin family. In terms of assembly, forms homo- and heterooligomers with DERL3 and, to a lesser extent, with DERL1. Interacts with the SEL1L/SYVN1 and VCP/SELENOS protein complexes. Mediates association between VCP and EDEM1, as well as that between VCP and the misfolded glycoproteins. Interacts with OS9. Interacts with SELENOK and SELENOS. Interacts with the signal recognition particle/SRP and the SRP receptor; in the process of endoplasmic reticulum stress-induced pre-emptive quality control. Interacts with CCDC47. In terms of tissue distribution, widely expressed, with lowest levels in brain and heart.

The protein localises to the endoplasmic reticulum membrane. Functionally, functional component of endoplasmic reticulum-associated degradation (ERAD) for misfolded lumenal glycoproteins, but not that of misfolded nonglycoproteins. May act by forming a channel that allows the retrotranslocation of misfolded glycoproteins into the cytosol where they are ubiquitinated and degraded by the proteasome. May mediate the interaction between VCP and misfolded glycoproteins. May also be involved in endoplasmic reticulum stress-induced pre-emptive quality control, a mechanism that selectively attenuates the translocation of newly synthesized proteins into the endoplasmic reticulum and reroutes them to the cytosol for proteasomal degradation. In Mus musculus (Mouse), this protein is Derlin-2.